Reading from the N-terminus, the 349-residue chain is Thioredoxin-related transmembrane protein 4 (349 aa).

A signal peptide spans 1–23 (MAGGRCGPQLTALLAAWIAAVAA). The region spanning 30–137 (AALPPEQSRV…FEDLQNYILE (108 aa)) is the Thioredoxin domain. Active-site nucleophile residues include C64 and C67. C64 and C67 are disulfide-bonded. A helical membrane pass occupies residues 190–210 (VFFVIATLVFGLFMGLVLVVI). The span at 225-240 (RSEQNRRSEEAHRAEQ) shows a compositional bias: basic and acidic residues. A disordered region spans residues 225–349 (RSEQNRRSEE…RKSQHADKGL (125 aa)). Composition is skewed to acidic residues over residues 242–284 (QDAE…EEDN) and 312–321 (VEPEEAEEGI). S251 and S259 each carry phosphoserine. Residues 335-349 (DSLRQRKSQHADKGL) are compositionally biased toward basic and acidic residues.

The protein localises to the nucleus inner membrane. It is found in the endoplasmic reticulum membrane. The protein is Thioredoxin-related transmembrane protein 4 (TMX4) of Homo sapiens (Human).